A 157-amino-acid polypeptide reads, in one-letter code: Transcription elongation factor GreA (157 aa).

The protein belongs to the GreA/GreB family.

In terms of biological role, necessary for efficient RNA polymerase transcription elongation past template-encoded arresting sites. The arresting sites in DNA have the property of trapping a certain fraction of elongating RNA polymerases that pass through, resulting in locked ternary complexes. Cleavage of the nascent transcript by cleavage factors such as GreA or GreB allows the resumption of elongation from the new 3'terminus. GreA releases sequences of 2 to 3 nucleotides. The protein is Transcription elongation factor GreA of Azorhizobium caulinodans (strain ATCC 43989 / DSM 5975 / JCM 20966 / LMG 6465 / NBRC 14845 / NCIMB 13405 / ORS 571).